A 170-amino-acid chain; its full sequence is MDVKWLDVPEGDTEELKRNVFFTTLEQLKAWARSNSLWPLTFGLACCAIEMMGVGGAHYDLDRFGSFFRASPRQSDVMIVSGTVTKKMAPIIRRLYDQMPEPKWVIAMGSCATAGGPYVKSYSVVKGVDQIVPVDVYIPGCPPNPAALIYGINKLKEKIRYEAKTGKKVL.

[4Fe-4S] cluster-binding residues include C46, C47, C111, and C141.

This sequence belongs to the complex I 20 kDa subunit family. In terms of assembly, NDH-1 is composed of 14 different subunits. Subunits NuoB, C, D, E, F, and G constitute the peripheral sector of the complex. It depends on [4Fe-4S] cluster as a cofactor.

It localises to the cell membrane. It catalyses the reaction a quinone + NADH + 5 H(+)(in) = a quinol + NAD(+) + 4 H(+)(out). In terms of biological role, NDH-1 shuttles electrons from NADH, via FMN and iron-sulfur (Fe-S) centers, to quinones in the respiratory chain. The immediate electron acceptor for the enzyme in this species is believed to be a menaquinone. Couples the redox reaction to proton translocation (for every two electrons transferred, four hydrogen ions are translocated across the cytoplasmic membrane), and thus conserves the redox energy in a proton gradient. The chain is NADH-quinone oxidoreductase subunit B from Geobacillus sp. (strain WCH70).